The sequence spans 766 residues: MMSLLAVLCVLYVWSPAMLTGGLGSTLDSLPRKTVPIGSNGGRLFREEGIWNYTTMLLRDDLNLLILGAREAIFALDLDDITIKKAMLKWEVTRDQQNDCSNKGKDATNDCKNYIRILHKKNDGRMYVCGTKAFNPTCGYLSYADGKLTLEILQEDTKGKCPFDPFQRYTSAMVDGAYYSATSMNFRGSEPVMMRSTEESIRTEFTSTWLSEPNFIHMAHIPEGQSNPDGDDDKIYLFFSETAVEYESYTKVDVSRVARVCKGDLGGQRTLQKKWTSFLKARLDCQVPNTNLPLLVQDVFHLCPDDWTTCVFYAVFTPQSDSSQYSAVCSYKIEDIKTVFSKGKFKAPFNVETSFVKWVMYSGELPDPRPGACIDNHAREKGITKSLELPDKTLQFVKDKPLMDQAVTAEQPLLVKRGAAFTRIVVTTATALNGTSHQVMFIGTKSGSVLKAVNYNGEMVIMEEIQLFDPSEPIKILRLSSSKKQLYVGSEVGVVQLSISECGRYQTCLDCVLARDPHCGWDLDTEHCATINSIHRTRSSTVIQSLNDGDASQCPAIGVSKPVNISFYHGNTVKLGCQPYSNLAQVKWQFNGEPIKPSNTIQILSDGLMIFNASLDATGYYTCSSIETVSQRKYQTQHVAYDVKMWSESGTTASLHHVKEKERTLVAMVVILSLVLAALLIWNLYKGHLSLPCLHRRVKATQNRHEDDANQVQPQRLASSVVNFNSNNNHANDQRYSSSRETDRLSTTAGSTGQMSLKYIDDESEI.

A signal peptide spans 1–24; the sequence is MMSLLAVLCVLYVWSPAMLTGGLG. The Extracellular segment spans residues 25–664; it reads STLDSLPRKT…LHHVKEKERT (640 aa). A Sema domain is found at 27–499; the sequence is LDSLPRKTVP…SEVGVVQLSI (473 aa). The N-linked (GlcNAc...) asparagine glycan is linked to asparagine 52. 4 disulfide bridges follow: cysteine 100/cysteine 111, cysteine 129/cysteine 138, cysteine 261/cysteine 373, and cysteine 285/cysteine 329. An N-linked (GlcNAc...) asparagine glycan is attached at asparagine 433. Residues 501-552 enclose the PSI domain; it reads ECGRYQTCLDCVLARDPHCGWDLDTEHCATINSIHRTRSSTVIQSLNDGDAS. Disulfide bonds link cysteine 502/cysteine 519 and cysteine 511/cysteine 528. Residues 555-640 enclose the Ig-like C2-type domain; it reads PAIGVSKPVN…QRKYQTQHVA (86 aa). Asparagine 564 and asparagine 612 each carry an N-linked (GlcNAc...) asparagine glycan. Cysteine 577 and cysteine 623 are oxidised to a cystine. The chain crosses the membrane as a helical span at residues 665–685; sequence LVAMVVILSLVLAALLIWNLY. The Cytoplasmic segment spans residues 686–766; that stretch reads KGHLSLPCLH…LKYIDDESEI (81 aa). A disordered region spans residues 724-750; that stretch reads FNSNNNHANDQRYSSSRETDRLSTTAG.

This sequence belongs to the semaphorin family.

It localises to the membrane. This is Semaphorin-4E (sema4e) from Danio rerio (Zebrafish).